Reading from the N-terminus, the 314-residue chain is tRNA dimethylallyltransferase (314 aa).

36–43 is a binding site for ATP; that stretch reads GPTASGKT. 38-43 lines the substrate pocket; the sequence is TASGKT. An interaction with substrate tRNA region spans residues 61 to 64; the sequence is DSVQ.

It belongs to the IPP transferase family. As to quaternary structure, monomer. It depends on Mg(2+) as a cofactor.

It carries out the reaction adenosine(37) in tRNA + dimethylallyl diphosphate = N(6)-dimethylallyladenosine(37) in tRNA + diphosphate. Functionally, catalyzes the transfer of a dimethylallyl group onto the adenine at position 37 in tRNAs that read codons beginning with uridine, leading to the formation of N6-(dimethylallyl)adenosine (i(6)A). This Sorangium cellulosum (strain So ce56) (Polyangium cellulosum (strain So ce56)) protein is tRNA dimethylallyltransferase.